The sequence spans 145 residues: Large ribosomal subunit protein uL16 (145 aa).

This sequence belongs to the universal ribosomal protein uL16 family. As to quaternary structure, part of the 50S ribosomal subunit.

Binds 23S rRNA and is also seen to make contacts with the A and possibly P site tRNAs. In Exiguobacterium sibiricum (strain DSM 17290 / CCUG 55495 / CIP 109462 / JCM 13490 / 255-15), this protein is Large ribosomal subunit protein uL16.